The chain runs to 349 residues: Oxygen-dependent coproporphyrinogen-III oxidase (349 aa).

Disordered stretches follow at residues 1–21 and 37–60; these read MGAS…KRAR and SLDG…GRSK. Ser-105 is a binding site for substrate. Residues His-109 and His-119 each contribute to the a divalent metal cation site. His-119 acts as the Proton donor in catalysis. 121–123 is a binding site for substrate; sequence NYR. The a divalent metal cation site is built by His-153 and His-183. An important for dimerization region spans residues 273–308; that stretch reads YAEFNLVWDRGTIFGLQTNGRTESILMSLPPLARWE.

The protein belongs to the aerobic coproporphyrinogen-III oxidase family. In terms of assembly, homodimer. It depends on a divalent metal cation as a cofactor.

It is found in the cytoplasm. It catalyses the reaction coproporphyrinogen III + O2 + 2 H(+) = protoporphyrinogen IX + 2 CO2 + 2 H2O. It participates in porphyrin-containing compound metabolism; protoporphyrin-IX biosynthesis; protoporphyrinogen-IX from coproporphyrinogen-III (O2 route): step 1/1. In terms of biological role, involved in the heme and chlorophyll biosynthesis. Catalyzes the aerobic oxidative decarboxylation of propionate groups of rings A and B of coproporphyrinogen-III to yield the vinyl groups in protoporphyrinogen-IX. The protein is Oxygen-dependent coproporphyrinogen-III oxidase of Prochlorococcus marinus (strain MIT 9313).